A 547-amino-acid chain; its full sequence is Putative laccase-5 (547 aa).

The N-terminal stretch at 1-35 is a signal peptide; the sequence is MGTPRGLRNAGSSSSACRFLAAFAVLLALPTLTAG. 2 Plastocyanin-like domains span residues 43–159 and 170–323; these read NVQM…PKRG and ELPP…YAPT. 2 N-linked (GlcNAc...) asparagine glycosylation sites follow: asparagine 48 and asparagine 89. 4 residues coordinate Cu cation: histidine 93, histidine 95, histidine 138, and histidine 140. 10 N-linked (GlcNAc...) asparagine glycosylation sites follow: asparagine 199, asparagine 215, asparagine 251, asparagine 311, asparagine 342, asparagine 349, asparagine 388, asparagine 395, asparagine 405, and asparagine 430. A Plastocyanin-like 3 domain is found at 408 to 531; it reads FVRPRVALLE…SMAWLVNDGP (124 aa). 7 residues coordinate Cu cation: histidine 448, histidine 451, histidine 453, histidine 510, cysteine 511, histidine 512, and histidine 516.

Belongs to the multicopper oxidase family. Cu cation serves as cofactor.

It is found in the secreted. The protein resides in the extracellular space. The protein localises to the apoplast. It catalyses the reaction 4 hydroquinone + O2 = 4 benzosemiquinone + 2 H2O. Functionally, lignin degradation and detoxification of lignin-derived products. The chain is Putative laccase-5 (LAC5) from Oryza sativa subsp. japonica (Rice).